A 396-amino-acid chain; its full sequence is MKILVMNCGSSSLKYQLINMENEEVLAIGLAERIGIAGARVKHEASGKEKVTIEQPMENHKTAIKIVLEALIDENYGAIKSMDEIAAVGHRVVHGGERFSSSVVVTDDVKNALEECSDLAPLHNPPNLMGIEACQEILPNVPMVGVFDTAFHQTMPESSYMYALPYELYEKHKIRRYGFHGTSHKYVAMKAAEILERPIEDLKIIACHLGNGASITAVDGGISVDTSMGFTPLEGLVMGTRCGDMDPAIVTFLMEKEKIDHNQVNAIMNKQSGVYGLSGVSSDFRDIEVAVKEGNKRAQLALDVYYKRVKKYIGAYAAEMGGVDAVVFTAGLGENSPETRKSICEGLEFLGIKIDNTKNNVRGKETVVSTDDTPTKVLLIPTNEELAIARETKSLI.

Residue Asn7 participates in Mg(2+) binding. Lys14 is an ATP binding site. Arg91 serves as a coordination point for substrate. Catalysis depends on Asp148, which acts as the Proton donor/acceptor. ATP is bound by residues 208–212 (HLGNG), 283–285 (DFR), and 331–335 (GLGEN). Glu384 contacts Mg(2+).

Belongs to the acetokinase family. Homodimer. It depends on Mg(2+) as a cofactor. Mn(2+) is required as a cofactor.

It is found in the cytoplasm. The enzyme catalyses acetate + ATP = acetyl phosphate + ADP. Its pathway is metabolic intermediate biosynthesis; acetyl-CoA biosynthesis; acetyl-CoA from acetate: step 1/2. Catalyzes the formation of acetyl phosphate from acetate and ATP. Can also catalyze the reverse reaction. The sequence is that of Acetate kinase from Alkaliphilus metalliredigens (strain QYMF).